The chain runs to 479 residues: Bifunctional AAC/APH (479 aa).

Residues 8–180 form the N-acetyltransferase domain; sequence ICIRTLIDDD…DCYLMEYRYD (173 aa). The interval 110–153 is acetyl-CoA binding site; the sequence is KGIGTRYIKLIFEFLKKERNANAVILDPHKNNPRAIRAYQKSGF. Catalysis depends on D374, which acts as the Proton acceptor; for phosphotransferase activity. D393 provides a ligand contact to a gentamycin.

This sequence in the C-terminal section; belongs to the aminoglycoside phosphotransferase family.

It is found in the cytoplasm. The enzyme catalyses a gentamycin + GTP = a gentamycin 2''-phosphate + GDP + H(+). Its function is as follows. Involved in resistance to gentamicin, tobramycin, and kanamycin. Tobramycin and kanamycin resistance is due to the ACC activity, specified by N-terminal region. The C-terminal region is a kinase that phosphorylates several 4,6-disubstituted aminoglycosides. This Enterococcus faecalis (strain ATCC 700802 / V583) protein is Bifunctional AAC/APH (aacA-aphD).